The following is a 428-amino-acid chain: 3-phosphoshikimate 1-carboxyvinyltransferase (428 aa).

Residues Lys22, Ser23, and Arg27 each contribute to the 3-phosphoshikimate site. Lys22 serves as a coordination point for phosphoenolpyruvate. The phosphoenolpyruvate site is built by Gly94 and Arg122. Residues Ser167, Gln169, Asp314, and Lys341 each coordinate 3-phosphoshikimate. Gln169 is a binding site for phosphoenolpyruvate. The Proton acceptor role is filled by Asp314. Residues Arg345 and Arg387 each coordinate phosphoenolpyruvate.

Belongs to the EPSP synthase family. In terms of assembly, monomer.

It is found in the cytoplasm. It carries out the reaction 3-phosphoshikimate + phosphoenolpyruvate = 5-O-(1-carboxyvinyl)-3-phosphoshikimate + phosphate. Its pathway is metabolic intermediate biosynthesis; chorismate biosynthesis; chorismate from D-erythrose 4-phosphate and phosphoenolpyruvate: step 6/7. In terms of biological role, catalyzes the transfer of the enolpyruvyl moiety of phosphoenolpyruvate (PEP) to the 5-hydroxyl of shikimate-3-phosphate (S3P) to produce enolpyruvyl shikimate-3-phosphate and inorganic phosphate. The polypeptide is 3-phosphoshikimate 1-carboxyvinyltransferase (Geotalea uraniireducens (strain Rf4) (Geobacter uraniireducens)).